The primary structure comprises 120 residues: U13-lycotoxin-Ls1f (120 aa).

Positions 1-16 (MKILFVLISILYAVYC) are cleaved as a signal peptide. A propeptide spanning residues 17–54 (FSSEEDVDSAYLANELEPVEDINSEQYAALEPKEEQER) is cleaved from the precursor. 4 cysteine pairs are disulfide-bonded: cysteine 56–cysteine 70, cysteine 63–cysteine 76, cysteine 69–cysteine 87, and cysteine 78–cysteine 85. Residues 56 to 95 (CAGMGQDCKDDCDCCLNIATCNCWFGRYFCSCTFGDYQTC) enclose the Agouti domain.

It belongs to the neurotoxin 05 (agouti) family. Post-translationally, contains 6 disulfide bonds. Expressed by the venom gland.

The protein localises to the secreted. The chain is U13-lycotoxin-Ls1f from Lycosa singoriensis (Wolf spider).